An 83-amino-acid polypeptide reads, in one-letter code: Mitochondrial import inner membrane translocase subunit Tim8 B (83 aa).

Residue Ala-2 is modified to N-acetylalanine. The short motif at 36 to 59 is the Twin CX3C motif element; the sequence is CWDKCVEKPGNRLDSRTENCLSSC. Intrachain disulfides connect Cys-36-Cys-59 and Cys-40-Cys-55.

It belongs to the small Tim family. As to quaternary structure, heterohexamer; possibly composed of 3 copies of TIMM8B and 3 copies of TIMM13, named soluble 70 kDa complex. Associates with the TIM22 complex, whose core is composed of TIMM22. As to expression, ubiquitous, with highest expression in heart, kidney, liver and skeletal muscle.

It is found in the mitochondrion inner membrane. Functionally, probable mitochondrial intermembrane chaperone that participates in the import and insertion of some multi-pass transmembrane proteins into the mitochondrial inner membrane. Also required for the transfer of beta-barrel precursors from the TOM complex to the sorting and assembly machinery (SAM complex) of the outer membrane. Acts as a chaperone-like protein that protects the hydrophobic precursors from aggregation and guide them through the mitochondrial intermembrane space. This is Mitochondrial import inner membrane translocase subunit Tim8 B (TIMM8B) from Homo sapiens (Human).